The following is a 557-amino-acid chain: Kelch repeat and BTB domain-containing protein 2 (557 aa).

One can recognise a BTB domain in the interval 26-95; the sequence is CDVIITIRDG…LYNRHISSMN (70 aa). In terms of domain architecture, BACK spans 143-223; it reads IVKYIKRMLM…CIDIQNLDKK (81 aa). Kelch repeat units follow at residues 305–352, 353–399, and 415–464; these read EIII…VIDD, TIYA…VLDQ, and SVHA…SHED.

In terms of assembly, interacts (via BTB domain) with host CUL3.

The protein localises to the host cytoplasm. Functionally, probable substrate-specific adapter of CUL3-containing E3 ubiquitin-protein ligases which mediate the ubiquitination and subsequent proteasomal degradation of host target proteins. The polypeptide is Kelch repeat and BTB domain-containing protein 2 (KBTB2) (Cowpox virus (strain Brighton Red) (CPV)).